The sequence spans 122 residues: Iron-sulfur cluster insertion protein ErpA (122 aa).

Iron-sulfur cluster contacts are provided by C50, C114, and C116.

This sequence belongs to the HesB/IscA family. Homodimer. Iron-sulfur cluster is required as a cofactor.

Functionally, required for insertion of 4Fe-4S clusters for at least IspG. This chain is Iron-sulfur cluster insertion protein ErpA, found in Alkalilimnicola ehrlichii (strain ATCC BAA-1101 / DSM 17681 / MLHE-1).